The following is a 779-amino-acid chain: Transcriptional regulator QRICH1 (779 aa).

The residue at position 1 (Met-1) is an N-acetylmethionine. Positions 6–48 (ENTISFEEYIRVKARSVPQHRMKEFLDSLASKGPEALQEFQQT) constitute a CARD domain. Disordered stretches follow at residues 141–163 (QGQA…PSPS) and 219–242 (ALSP…TASV). A Phosphoserine modification is found at Ser-346. Residues Lys-354 and Lys-359 each participate in a glycyl lysine isopeptide (Lys-Gly) (interchain with G-Cter in SUMO2) cross-link. Residues 420 to 430 (QQQPQQQTPQE) are compositionally biased toward low complexity. The disordered stretch occupies residues 420–443 (QQQPQQQTPQEQTPPPPQQQQQQQ). The residue at position 467 (Ser-467) is a Phosphoserine.

Its subcellular location is the nucleus. The protein localises to the cytoplasm. It is found in the cell membrane. In terms of biological role, transcriptional regulator that acts as a mediator of the integrated stress response (ISR) through transcriptional control of protein homeostasis under conditions of ER stress. Controls the outcome of the unfolded protein response (UPR), an ER-stress response pathway that either promotes recovery of ER homeostasis and cell survival, or triggers the terminal UPR which elicits programmed cell death when ER stress is prolonged and unresolved. ER stress induces QRICH1 translation by a ribosome translation re-initiation mechanism in response to EIF2S1/eIF-2-alpha phosphorylation, and stress-induced QRICH1 regulates a transcriptional program associated with protein translation, protein secretion-mediated proteotoxicity and cell death during the terminal UPR. May cooperate with ATF4 transcription factor signaling to regulate ER homeostasis which is critical for cell viability. Up-regulates CASP3/caspase-3 activity in epithelial cells under ER stress. Central regulator of proteotoxicity associated with ER stress-mediated inflammatory diseases in the intestines and liver. Involved in chondrocyte hypertrophy, a process required for normal longitudinal bone growth. This Bos taurus (Bovine) protein is Transcriptional regulator QRICH1 (QRICH1).